The sequence spans 130 residues: uncharacterized protein (130 aa).

Polar residues-rich tracts occupy residues 1-27 (MEILNQFSQFSPNMEAQGASSIPQPSQ) and 36-46 (QAENQETAKNG). 2 disordered regions span residues 1-46 (MEIL…AKNG) and 103-130 (VSAQTQKATSVKFDRRRNELDSDEELDL). A coiled-coil region spans residues 27–51 (QDAHEKARQQAENQETAKNGMISQI).

The protein belongs to the PDCD5 family.

This is an uncharacterized protein from Caenorhabditis elegans.